The sequence spans 693 residues: A disintegrin and metalloproteinase with thrombospondin motifs like (693 aa).

The signal sequence occupies residues 1–24 (MESSVATHWLSAFVILCSFITTQS). Residues 67–80 (IPTSHPANSNSADS) show a composition bias toward polar residues. Residues 67–91 (IPTSHPANSNSADSGKTPHLKTEKV) are disordered. N124 and N194 each carry an N-linked (GlcNAc...) asparagine glycan. The 233-residue stretch at 353–585 (IYPEILVIVD…DTATCLYNSP (233 aa)) folds into the Peptidase M12B domain. 2 disulfides stabilise this stretch: C485–C580 and C541–C564. Residue H514 coordinates Zn(2+). Positions 514-525 (HEVGHLLGAVHD) match the Metal-binding motif. E515 is a catalytic residue. H518 and H524 together coordinate Zn(2+). The N-linked (GlcNAc...) asparagine glycan is linked to N687.

Zn(2+) serves as cofactor.

The protein localises to the secreted. Its subcellular location is the extracellular space. It is found in the extracellular matrix. Its function is as follows. Involved in larval molting and metamorphosis. May degrade extracellular matrix (ECM) and basement membrane (BM) during the development of organs to allow degeneration and remodeling of tissues. The protein is A disintegrin and metalloproteinase with thrombospondin motifs like of Bombyx mori (Silk moth).